A 275-amino-acid chain; its full sequence is Beta-lactamase OXA-2 (275 aa).

An N-terminal signal peptide occupies residues Met-1–Ala-21. The active-site Acyl-ester intermediate is the Ser-72. An N6-carboxylysine modification is found at Lys-75. Lys-210 to Gly-212 is a binding site for substrate.

Belongs to the class-D beta-lactamase family.

The enzyme catalyses a beta-lactam + H2O = a substituted beta-amino acid. This is an oxacillin-hydrolyzing beta-lactamase. This Escherichia coli protein is Beta-lactamase OXA-2 (bla).